A 141-amino-acid polypeptide reads, in one-letter code: MAKKITGFIKLQIPAGGANPAPPVGPALGQKGVNIMEFCKQFNAKTQSEAGMIIPVVITVFSDKSFTFVTKTPPAAVLLLKEAKLQKGSGEPNRNKVGTVTMEQVRKIAELKKPDLNSVDIEGAAQMVMGTARSMGIVVEG.

This sequence belongs to the universal ribosomal protein uL11 family. In terms of assembly, part of the ribosomal stalk of the 50S ribosomal subunit. Interacts with L10 and the large rRNA to form the base of the stalk. L10 forms an elongated spine to which L12 dimers bind in a sequential fashion forming a multimeric L10(L12)X complex. Post-translationally, one or more lysine residues are methylated.

Its function is as follows. Forms part of the ribosomal stalk which helps the ribosome interact with GTP-bound translation factors. This Chlorobaculum parvum (strain DSM 263 / NCIMB 8327) (Chlorobium vibrioforme subsp. thiosulfatophilum) protein is Large ribosomal subunit protein uL11.